An 88-amino-acid chain; its full sequence is N(2)-fixation sustaining protein CowN (88 aa).

Belongs to the CowN family.

In terms of biological role, is required to sustain N(2)-dependent growth in the presence of low levels of carbon monoxide (CO). Probably acts by protecting the N(2) fixation ability of the nitrogenase complex, which is inactivated in the presence of CO. This is N(2)-fixation sustaining protein CowN from Rhodomicrobium vannielii (strain ATCC 17100 / DSM 162 / LMG 4299 / NCIMB 10020 / ATH 3.1.1).